A 296-amino-acid polypeptide reads, in one-letter code: Ribosomal RNA small subunit methyltransferase A (296 aa).

S-adenosyl-L-methionine is bound by residues N31, L33, G58, E79, D104, and N129.

Belongs to the class I-like SAM-binding methyltransferase superfamily. rRNA adenine N(6)-methyltransferase family. RsmA subfamily.

It localises to the cytoplasm. The enzyme catalyses adenosine(1518)/adenosine(1519) in 16S rRNA + 4 S-adenosyl-L-methionine = N(6)-dimethyladenosine(1518)/N(6)-dimethyladenosine(1519) in 16S rRNA + 4 S-adenosyl-L-homocysteine + 4 H(+). Functionally, specifically dimethylates two adjacent adenosines (A1518 and A1519) in the loop of a conserved hairpin near the 3'-end of 16S rRNA in the 30S particle. May play a critical role in biogenesis of 30S subunits. This Shouchella clausii (strain KSM-K16) (Alkalihalobacillus clausii) protein is Ribosomal RNA small subunit methyltransferase A.